The sequence spans 339 residues: EEIG family member 2 (339 aa).

The region spanning 1–111 (MRLLDGGSFT…ILKVLISMQL (111 aa)) is the C2 NT-type domain. A Phosphoserine modification is found at serine 197. The disordered stretch occupies residues 226–262 (TEPITAEPSPDPTAAAATATTTTAKEEEASEKLARCP). Residues 230-248 (TAEPSPDPTAAAATATTTT) show a composition bias toward low complexity. The segment covering 249–259 (AKEEEASEKLA) has biased composition (basic and acidic residues). 5 positions are modified to phosphoserine: serine 255, serine 267, serine 299, serine 300, and serine 329.

This sequence belongs to the EEIG family. In terms of tissue distribution, expressed in bone marrow-derived macrophages.

This is EEIG family member 2 (Eeig2) from Mus musculus (Mouse).